Consider the following 361-residue polypeptide: P2Y purinoceptor 4 (361 aa).

The Extracellular portion of the chain corresponds to 1-30 (MTSADSLLFTSLGPSPSSGDGDCKFNEEFK). Residues 31–58 (FILLPLSYAVVFVLGLALNAPTLWLFLF) traverse the membrane as a helical segment. Residues 59-68 (RLRPWDATAT) lie on the Cytoplasmic side of the membrane. Residues 69–91 (YMFHLALSDTLYVLSLPTLVYYY) traverse the membrane as a helical segment. Residues 92 to 108 (AARNHWPFGTGFCKFVR) are Extracellular-facing. Cysteines 104 and 181 form a disulfide. The chain crosses the membrane as a helical span at residues 109 to 127 (FLFYWNLYCSVLFLTCISV). The Cytoplasmic portion of the chain corresponds to 128-149 (HRYMGICHPLRAIRWGRPRFAG). The chain crosses the membrane as a helical span at residues 150–170 (LLCLGVWLVVAGCLVPNLFFV). Residues 171–192 (TTNANGTTILCHDTTLPEEFDH) are Extracellular-facing. Asn-175 carries N-linked (GlcNAc...) asparagine glycosylation. A helical transmembrane segment spans residues 193–218 (YVYFSSTIMVLLFGFPFLITLVCYGL). The Cytoplasmic segment spans residues 219–242 (MARRLYRPLPGAGQSSSRLRSLRT). Residues 243 to 265 (IAVVLTVFAVCFVPFHITRTIYY) traverse the membrane as a helical segment. Topologically, residues 266–283 (LARLLNAECRVLNIVNVV) are extracellular. A helical membrane pass occupies residues 284-305 (YKVTRPLASANSCLDPVLYLFT). Residues 306–361 (GDKYRNQLQQLCRGSTPKRRTTASSLALVTLHEESISRWADIHQDSIFPAYEGDRL) are Cytoplasmic-facing.

The protein belongs to the G-protein coupled receptor 1 family. Phosphorylation of Ser-329 and Ser-330 is a key step in agonist-dependent desensitization and loss of surface P2RY4. This phosphorylation does not involve PKC, nor other calcium-activated kinases. As to expression, expressed in the liver, intestine, stomach, bladder and lung.

The protein resides in the cell membrane. Receptor for ATP and UTP coupled to G-proteins that activate a phosphatidylinositol-calcium second messenger system. In Mus musculus (Mouse), this protein is P2Y purinoceptor 4 (P2ry4).